Here is a 1620-residue protein sequence, read N- to C-terminus: Probable serine/threonine-protein kinase gdt4 (1620 aa).

Residues 1–19 (MKLEQRIFFLICLVINSFS) form the signal peptide. Over 20 to 891 (NCSLLVAPDG…EVIGINEQLN (872 aa)) the chain is Extracellular. Residues 892–912 (ILAIVLPITISLFAAASILAG) form a helical membrane-spanning segment. The Cytoplasmic segment spans residues 913–1620 (YLVIKKYKKP…AKRNKKNQNQ (708 aa)). In terms of domain architecture, Protein kinase spans 1349–1604 (IVLEKYLSEG…TLIDLLEKLL (256 aa)). ATP contacts are provided by residues 1355-1363 (LSEGSFGVV) and Lys-1376. Asp-1466 acts as the Proton acceptor in catalysis.

In the N-terminal section; belongs to the GDT family. It in the C-terminal section; belongs to the protein kinase superfamily. TKL Ser/Thr protein kinase family.

The protein localises to the membrane. It catalyses the reaction L-seryl-[protein] + ATP = O-phospho-L-seryl-[protein] + ADP + H(+). The enzyme catalyses L-threonyl-[protein] + ATP = O-phospho-L-threonyl-[protein] + ADP + H(+). This is Probable serine/threonine-protein kinase gdt4 (gdt4) from Dictyostelium discoideum (Social amoeba).